A 148-amino-acid polypeptide reads, in one-letter code: MDASTKTKKGAGGRKGGPRKKSVTRSTRAGLQFPVGRIGRYLKKGRYAQRVGTGAPVYLAAVLEYLAAEVLELAGNAARDNKKNRIIPRHVLLAVRNDEELGKLLAGVTIAHGGVLPNINPILLPKKNEKAATTTKSPSKATKSPKKA.

Residues 1-23 (MDASTKTKKGAGGRKGGPRKKSV) show a composition bias toward basic residues. Disordered stretches follow at residues 1–28 (MDAS…RSTR) and 127–148 (KNEK…PKKA). Over residues 131–142 (AATTTKSPSKAT) the composition is skewed to low complexity. 2 consecutive short sequence motifs (SPKK motif) follow at residues 137-140 (SPSK) and 144-147 (SPKK).

Belongs to the histone H2A family. In terms of assembly, the nucleosome is a histone octamer containing two molecules each of H2A, H2B, H3 and H4 assembled in one H3-H4 heterotetramer and two H2A-H2B heterodimers. The octamer wraps approximately 147 bp of DNA.

The protein resides in the nucleus. It is found in the chromosome. In terms of biological role, core component of nucleosome. Nucleosomes wrap and compact DNA into chromatin, limiting DNA accessibility to the cellular machineries which require DNA as a template. Histones thereby play a central role in transcription regulation, DNA repair, DNA replication and chromosomal stability. DNA accessibility is regulated via a complex set of post-translational modifications of histones, also called histone code, and nucleosome remodeling. The protein is Probable histone H2A.1 of Medicago truncatula (Barrel medic).